We begin with the raw amino-acid sequence, 100 residues long: Small ribosomal subunit protein uS14c (100 aa).

This sequence belongs to the universal ribosomal protein uS14 family. Part of the 30S ribosomal subunit.

The protein resides in the plastid. It is found in the chloroplast. Binds 16S rRNA, required for the assembly of 30S particles. This is Small ribosomal subunit protein uS14c from Vitis vinifera (Grape).